Consider the following 521-residue polypeptide: Cytochrome b5 reductase 4 (521 aa).

Met-1 is subject to N-acetylmethionine. The span at 1 to 18 shows a compositional bias: polar residues; the sequence is MLNVPSQSFPAPRSQQRV. A disordered region spans residues 1–27; the sequence is MLNVPSQSFPAPRSQQRVASGGRSKVP. One can recognise a Cytochrome b5 heme-binding domain in the interval 54 to 130; the sequence is LIEVTEEELK…LKECLVGRMA (77 aa). Positions 89 and 112 each coordinate heme. Positions 165–256 constitute a CS domain; the sequence is PSYPSYDWFQ…KENTSWDFLG (92 aa). In terms of domain architecture, FAD-binding FR-type spans 273–385; that stretch reads LYYRKCQLIS…SSPEGNFKIS (113 aa). Residues 365-380 and 392-424 contribute to the FAD site; these read DRLQ…SPEG and DLFL…KVKL.

It belongs to the flavoprotein pyridine nucleotide cytochrome reductase family. It depends on FAD as a cofactor. Widely expressed.

Its subcellular location is the endoplasmic reticulum. It catalyses the reaction 2 Fe(III)-[cytochrome b5] + NADH = 2 Fe(II)-[cytochrome b5] + NAD(+) + H(+). In terms of biological role, NADH-cytochrome b5 reductase involved in endoplasmic reticulum stress response pathway. Plays a critical role in protecting pancreatic beta-cells against oxidant stress, possibly by protecting the cell from excess buildup of reactive oxygen species (ROS). Reduces a variety of substrates in vitro, such as cytochrome c, feericyanide and methemoglobin. The sequence is that of Cytochrome b5 reductase 4 from Homo sapiens (Human).